A 217-amino-acid polypeptide reads, in one-letter code: Phosphatidylcholine synthase (217 aa).

Residues 1-8 (ACIGVFSL) form a helical membrane-spanning segment. Residues 9-16 (VKIYQHEY) are Periplasmic-facing. The chain crosses the membrane as a helical span at residues 17-37 (IFALWLMFITVVIDAVDGTLA). Residues 38-50 (RLVNIKKILPKID) lie on the Cytoplasmic side of the membrane. Residues 51 to 71 (GALLDNIVDYLNYVITPCFFL) form a helical membrane-spanning segment. At 72–77 (LVKPGM) the chain is on the periplasmic side. The chain crosses the membrane as a helical span at residues 78 to 98 (LPPEYSVFLIAAVSITSAYQF). At 99–107 (CQCDAKTPD) the chain is on the cytoplasmic side. A helical membrane pass occupies residues 108-128 (HFFKGFPCYWNITILYMFIFN). Residue Thr129 is a topological domain, periplasmic. The chain crosses the membrane as a helical span at residues 130–149 (SAATNAIILIILSILIFVPV). The Cytoplasmic segment spans residues 150-164 (KYVYPSRLDYLTESR). Residues 165 to 185 (ILKILMHICSIIYAVSSICIL) form a helical membrane-spanning segment. Over 186–191 (ISYPNT) the chain is Periplasmic. The helical transmembrane segment at 192-212 (NIICLSLSVAYVGMYLFLSFY) threads the bilayer. At 213-217 (RTYYP) the chain is on the cytoplasmic side.

Belongs to the CDP-alcohol phosphatidyltransferase class-I family. Mn(2+) is required as a cofactor.

The protein localises to the cell inner membrane. The enzyme catalyses a CDP-1,2-diacyl-sn-glycerol + choline = a 1,2-diacyl-sn-glycero-3-phosphocholine + CMP + H(+). Functionally, condenses choline with CDP-diglyceride to produce phosphatidylcholine and CMP. In Legionella bozemanae (Fluoribacter bozemanae), this protein is Phosphatidylcholine synthase.